We begin with the raw amino-acid sequence, 538 residues long: Furcatin hydrolase (538 aa).

The transit peptide at 1-66 (MATITTLASS…NFNKDNWLAS (66 aa)) directs the protein to the chloroplast. The tract at residues 18–37 (SFPGGSSRKPKKDNLSIKPP) is disordered. A beta-D-glucoside contacts are provided by residues Q88, H192, and 237–238 (NE). E238 acts as the Proton donor in catalysis. Residues C257 and C260 are joined by a disulfide bond. Residues Y376, E447, W494, 501–502 (EW), and F510 contribute to the a beta-D-glucoside site. Catalysis depends on E447, which acts as the Nucleophile.

The protein belongs to the glycosyl hydrolase 1 family. In terms of tissue distribution, expressed in young and mature leaves, but not in fruit and stem.

The protein resides in the plastid. It is found in the chloroplast. The catalysed reaction is 7-[beta-D-apiofuranosyl-(1-&gt;6)-beta-D-glucopyranosyloxy]isoflavonoid + H2O = a 7-hydroxyisoflavonoid + beta-D-apiofuranosyl-(1-&gt;6)-D-glucose.. Functionally, disaccharide-specific acuminosidase, hydrolyzes the beta-glycosidic bond between p-allylphenol and acuminose with retention of anomeric configuration. Has highest activity towards furcatin, and lower activity towards beta-primeverosides and beta-vicianoside. Has very low activity towards beta-gentobiosides. This is Furcatin hydrolase from Viburnum furcatum (Scarlet leaved viburnum).